The sequence spans 403 residues: Ribosomal RNA large subunit methyltransferase I (403 aa).

In terms of domain architecture, PUA spans 9 to 88 (YPRLVLSKGR…ESIDIAFFTR (80 aa)).

Belongs to the methyltransferase superfamily. RlmI family.

Its subcellular location is the cytoplasm. The catalysed reaction is cytidine(1962) in 23S rRNA + S-adenosyl-L-methionine = 5-methylcytidine(1962) in 23S rRNA + S-adenosyl-L-homocysteine + H(+). Functionally, specifically methylates the cytosine at position 1962 (m5C1962) of 23S rRNA. This Salmonella newport (strain SL254) protein is Ribosomal RNA large subunit methyltransferase I.